Consider the following 560-residue polypeptide: Trans-activating transcriptional regulatory protein (560 aa).

Residues 106–133 (DSMKRKASELDSDSDSGESSKGKKRVIK) form a disordered region.

Belongs to the nucleopolyhedrovirus IE-1 protein family.

Its function is as follows. Regulatory transcriptional protein, which trans-activates gene expression from early baculovirus promoters. Can also trans-activate its own promoter, suggesting that it is autoregulated during normal infection of insect cells. This chain is Trans-activating transcriptional regulatory protein (IE1), found in Choristoneura fumiferana nuclear polyhedrosis virus (CfMNPV).